A 574-amino-acid chain; its full sequence is VAO-type flavoprotein oxidase VAO615 (574 aa).

Positions 1–17 are cleaved as a signal peptide; sequence MPASLLRFLALAGTAVG. Intrachain disulfides connect Cys-28-Cys-572, Cys-64-Cys-77, Cys-108-Cys-118, and Cys-450-Cys-476. Asn-47 is a glycosylation site (N-linked (GlcNAc...) asparagine). Residue Asn-105 is glycosylated (N-linked (GlcNAc...) asparagine). Residues 120-299 enclose the FAD-binding PCMH-type domain; that stretch reads LGNYPSYVVN…LSMTARLHRD (180 aa). 5 N-linked (GlcNAc...) asparagine glycosylation sites follow: Asn-129, Asn-211, Asn-310, Asn-346, and Asn-438. Residues 157–222 constitute a cross-link (6-(S-cysteinyl)-8alpha-(pros-histidyl)-FAD (His-Cys)); that stretch reads HDYLGKSTGK…TGHRIVGGTC (66 aa).

Belongs to the oxygen-dependent FAD-linked oxidoreductase family. FAD serves as cofactor. The FAD cofactor is bound via a bicovalent 6-S-cysteinyl, 8alpha-N1-histidyl FAD linkage.

It is found in the secreted. In terms of biological role, probably oxidoreductase that, when reduced, rapidly reacts with molecular oxygen, a hallmark of flavoprotein oxidases. A large panel of alcohols, including carbohydrates, steroids and secondary alcohols were tested as potential substrates, but none has been identified so far. This chain is VAO-type flavoprotein oxidase VAO615, found in Thermothelomyces thermophilus (strain ATCC 42464 / BCRC 31852 / DSM 1799) (Sporotrichum thermophile).